We begin with the raw amino-acid sequence, 79 residues long: Cell division protein ZapB (79 aa).

Residues 4–78 (EVFEKLEAKV…LQALLGKMEE (75 aa)) adopt a coiled-coil conformation.

This sequence belongs to the ZapB family. In terms of assembly, homodimer. The ends of the coiled-coil dimer bind to each other, forming polymers. Interacts with FtsZ.

It is found in the cytoplasm. In terms of biological role, non-essential, abundant cell division factor that is required for proper Z-ring formation. It is recruited early to the divisome by direct interaction with FtsZ, stimulating Z-ring assembly and thereby promoting cell division earlier in the cell cycle. Its recruitment to the Z-ring requires functional FtsA or ZipA. The sequence is that of Cell division protein ZapB from Cronobacter sakazakii (strain ATCC BAA-894) (Enterobacter sakazakii).